Consider the following 781-residue polypeptide: Aconitate hydratase, mitochondrial (781 aa).

The N-terminal 27 residues, 1-27, are a transit peptide targeting the mitochondrion; sequence MAPYSLLVTRLQKALGVRQYHVASVLC. Gln-28 bears the Pyrrolidone carboxylic acid mark. Lys-31 carries the post-translational modification N6-succinyllysine. Lys-50 bears the N6-acetyllysine; alternate mark. Residue Lys-50 is modified to N6-succinyllysine; alternate. Gln-99 is a substrate binding site. Residues Lys-138 and Lys-144 each carry the N6-acetyllysine; alternate modification. 2 positions are modified to N6-succinyllysine; alternate: Lys-138 and Lys-144. 192 to 194 is a substrate binding site; sequence DSH. Lys-233 is modified (N6-acetyllysine; alternate). Lys-233 is modified (N6-succinyllysine; alternate). Cys-385 contacts [4Fe-4S] cluster. The residue at position 411 (Lys-411) is an N6-succinyllysine. Residues Cys-448 and Cys-451 each contribute to the [4Fe-4S] cluster site. Arg-474 and Arg-479 together coordinate substrate. N6-acetyllysine; alternate is present on residues Lys-517 and Lys-523. N6-succinyllysine; alternate occurs at positions 517 and 523. Positions 524–537 are enriched in basic and acidic residues; that stretch reads LEAPDADELPRAEF. The segment at 524-561 is disordered; that stretch reads LEAPDADELPRAEFDPGQDTYQHPPKDSSGQRVDVSPT. Lys-549 is subject to N6-succinyllysine. Residues 551–561 are compositionally biased toward polar residues; sequence SSGQRVDVSPT. Position 559 is a phosphoserine (Ser-559). At Lys-573 the chain carries N6-acetyllysine; alternate. N6-succinyllysine; alternate is present on Lys-573. N6-succinyllysine is present on residues Lys-577 and Lys-591. Residue Lys-605 is modified to N6-acetyllysine; alternate. Residue Lys-605 is modified to N6-succinyllysine; alternate. Arg-607 is a binding site for substrate. N6-succinyllysine is present on Lys-628. At Ser-670 the chain carries Phosphoserine. Residue 670–671 participates in substrate binding; sequence SR. N6-succinyllysine is present on Lys-689. Residues Lys-723 and Lys-730 each carry the N6-acetyllysine; alternate modification. An N6-succinyllysine; alternate mark is found at Lys-723 and Lys-730. N6-acetyllysine is present on residues Lys-736, Lys-739, and Lys-743.

Belongs to the aconitase/IPM isomerase family. In terms of assembly, monomer. It depends on [4Fe-4S] cluster as a cofactor. Post-translationally, forms covalent cross-links mediated by transglutaminase TGM2, between a glutamine and the epsilon-amino group of a lysine residue, forming homopolymers and heteropolymers.

It localises to the mitochondrion. The catalysed reaction is citrate = D-threo-isocitrate. Its pathway is carbohydrate metabolism; tricarboxylic acid cycle; isocitrate from oxaloacetate: step 2/2. Its function is as follows. Catalyzes the isomerization of citrate to isocitrate via cis-aconitate. This is Aconitate hydratase, mitochondrial (ACO2) from Sus scrofa (Pig).